The primary structure comprises 224 residues: Holliday junction branch migration complex subunit RuvA (224 aa).

Residues 1–67 are domain I; sequence MISWLKGEKV…EDGTSLYGFI (67 aa). The segment at 68 to 146 is domain II; sequence EVNQRDLFRE…RFTDNDKTIH (79 aa). The tract at residues 147 to 157 is flexible linker; sequence ENKNDIEANQF. Residues 157 to 224 form a domain III region; sequence FSKYIDEIYL…ILMKLSEKST (68 aa).

Belongs to the RuvA family. Homotetramer. Forms an RuvA(8)-RuvB(12)-Holliday junction (HJ) complex. HJ DNA is sandwiched between 2 RuvA tetramers; dsDNA enters through RuvA and exits via RuvB. An RuvB hexamer assembles on each DNA strand where it exits the tetramer. Each RuvB hexamer is contacted by two RuvA subunits (via domain III) on 2 adjacent RuvB subunits; this complex drives branch migration. In the full resolvosome a probable DNA-RuvA(4)-RuvB(12)-RuvC(2) complex forms which resolves the HJ.

Its subcellular location is the cytoplasm. In terms of biological role, the RuvA-RuvB-RuvC complex processes Holliday junction (HJ) DNA during genetic recombination and DNA repair, while the RuvA-RuvB complex plays an important role in the rescue of blocked DNA replication forks via replication fork reversal (RFR). RuvA specifically binds to HJ cruciform DNA, conferring on it an open structure. The RuvB hexamer acts as an ATP-dependent pump, pulling dsDNA into and through the RuvAB complex. HJ branch migration allows RuvC to scan DNA until it finds its consensus sequence, where it cleaves and resolves the cruciform DNA. The polypeptide is Holliday junction branch migration complex subunit RuvA (Prochlorococcus marinus (strain NATL2A)).